Consider the following 231-residue polypeptide: Putative N-acetylmannosamine-6-phosphate 2-epimerase (231 aa).

The protein belongs to the NanE family.

It catalyses the reaction an N-acyl-D-glucosamine 6-phosphate = an N-acyl-D-mannosamine 6-phosphate. It functions in the pathway amino-sugar metabolism; N-acetylneuraminate degradation; D-fructose 6-phosphate from N-acetylneuraminate: step 3/5. Converts N-acetylmannosamine-6-phosphate (ManNAc-6-P) to N-acetylglucosamine-6-phosphate (GlcNAc-6-P). The sequence is that of Putative N-acetylmannosamine-6-phosphate 2-epimerase from Latilactobacillus sakei subsp. sakei (strain 23K) (Lactobacillus sakei subsp. sakei).